The following is a 285-amino-acid chain: 4-diphosphocytidyl-2-C-methyl-D-erythritol kinase (285 aa).

Lysine 10 is a catalytic residue. 93 to 103 serves as a coordination point for ATP; that stretch reads PIGGGLGGGSS. Aspartate 135 is a catalytic residue.

Belongs to the GHMP kinase family. IspE subfamily.

It carries out the reaction 4-CDP-2-C-methyl-D-erythritol + ATP = 4-CDP-2-C-methyl-D-erythritol 2-phosphate + ADP + H(+). It participates in isoprenoid biosynthesis; isopentenyl diphosphate biosynthesis via DXP pathway; isopentenyl diphosphate from 1-deoxy-D-xylulose 5-phosphate: step 3/6. Catalyzes the phosphorylation of the position 2 hydroxy group of 4-diphosphocytidyl-2C-methyl-D-erythritol. The chain is 4-diphosphocytidyl-2-C-methyl-D-erythritol kinase from Ruthia magnifica subsp. Calyptogena magnifica.